We begin with the raw amino-acid sequence, 503 residues long: Excitatory amino acid transporter (503 aa).

Topologically, residues 1 to 18 (MPPDTRINKEIMVSWIRK) are cytoplasmic. 3 helical membrane-spanning segments follow: residues 19 to 39 (NLLLVLTVSSVVLGALCGFLL), 59 to 79 (LMHMLKMMILPLIMSSLISGL), and 96 to 116 (TYYMFTTAVAVVTGIFLVLVI). The Extracellular portion of the chain corresponds to 117 to 198 (HPGDPTIKKE…SLDYVKASVE (82 aa)). N-linked (GlcNAc...) asparagine glycans are attached at residues N177 and N187. 5 consecutive transmembrane segments (helical) span residues 199–219 (YTSGMNVLGVIVFCIAIGISL), 239–259 (VIMKLVMTVMWYSPFGIFCLI), 281–301 (VTVLSGLAIHSLISLPLIFFV), 369–389 (AVAAIFIAQINGVHLSFGQVV), and 400–420 (IGAASVPSAGLVTMLLVLTAV).

It belongs to the dicarboxylate/amino acid:cation symporter (DAACS) (TC 2.A.23) family.

The protein resides in the membrane. Its function is as follows. Transports L-glutamate and also L- and D-aspartate. Essential for terminating the postsynaptic action of glutamate by rapidly removing released glutamate from the synaptic cleft. Acts as a symport by cotransporting sodium. This is Excitatory amino acid transporter (glt-1) from Caenorhabditis elegans.